Here is a 63-residue protein sequence, read N- to C-terminus: Large ribosomal subunit protein bL28 (63 aa).

The protein belongs to the bacterial ribosomal protein bL28 family.

This chain is Large ribosomal subunit protein bL28, found in Geobacter sulfurreducens (strain ATCC 51573 / DSM 12127 / PCA).